The primary structure comprises 141 residues: Hemoglobin subunit alpha-D (141 aa).

Residues Met-1–Arg-141 enclose the Globin domain. Residues His-58 and His-87 each contribute to the heme b site.

This sequence belongs to the globin family. In terms of assembly, heterotetramer of two alpha-D chains and two beta chains. In terms of tissue distribution, red blood cells.

Involved in oxygen transport from the lung to the various peripheral tissues. This chain is Hemoglobin subunit alpha-D (HBAD), found in Apus apus (Common swift).